A 299-amino-acid chain; its full sequence is Sugar transporter SWEET1 (299 aa).

Residues 7–91 (QVLSISAITT…CVFFLIYSLP (85 aa)) form the MtN3/slv 1 domain. The next 7 helical transmembrane spans lie at 8–28 (VLSISAITTTIALFFCGIPIC), 36–56 (AVGDISGVPFLMGVLGGSFWL), 67–87 (MIIVNVVGVACMAFYCVFFLI), 95–115 (FTCQLILVTSTIGGMVLWIAL), 124–144 (VICMTFNIMNFGAPLAGLGVV), 155–175 (LPMCVANFLVSSQWCLYGNLV), and 180–200 (IIIPNGIGMFLAIVQLALFVV). One can recognise a MtN3/slv 2 domain in the interval 121–205 (YLGVICMTFN…ALFVVLPIRE (85 aa)). Residues 230–299 (RGDCIVSSPP…DPDLSSIQSP (70 aa)) form a disordered region. Positions 247–261 (NETRSDVEDKFDKLM) are enriched in basic and acidic residues. Over residues 276-299 (SMGSPPSYKSRSSSDPDLSSIQSP) the composition is skewed to low complexity.

The protein belongs to the SWEET sugar transporter family.

The protein resides in the golgi apparatus membrane. The protein localises to the cell membrane. Functionally, mediates both low-affinity uptake and efflux of sugar across the membrane. This Caenorhabditis elegans protein is Sugar transporter SWEET1 (swt-1).